The sequence spans 291 residues: Verruculogen synthase (291 aa).

Y68 is an active-site residue.

This sequence belongs to the PhyH family. As to quaternary structure, homodimer. It depends on Fe cation as a cofactor.

It catalyses the reaction fumitremorgin B + 2-oxoglutarate + AH2 + 2 O2 = verruculogen + succinate + A + CO2 + H2O. It functions in the pathway mycotoxin biosynthesis. In terms of biological role, verruculogen synthase; part of the gene cluster that mediates the biosynthesis of fumitremorgins, indole alkaloids that carry not only intriguing chemical structures, but also interesting biological and pharmacological activities. The biosynthesis of fumitremorgin-type alkaloids begins by condensation of the two amino acids L-tryptophan and L-proline to brevianamide F, catalyzed by the non-ribosomal peptide synthetase ftmA. Brevianamide F is then prenylated by the prenyltransferase ftmPT1/ftmB in the presence of dimethylallyl diphosphate, resulting in the formation of tryprostatin B. The three cytochrome P450 monooxygenases, ftmP450-1/ftmC, ftmP450-2/ftmE and ftmP450-3/FtmG, are responsible for the conversion of tryprostatin B to 6-hydroxytryprostatin B, tryprostatin A to fumitremorgin C and fumitremorgin C to 12,13-dihydroxyfumitremorgin C, respectively. The putative methyltransferase ftmMT/ftmD is expected for the conversion of 6-hydroxytryprostatin B to tryprostatin A. FtmPT2/FtmH catalyzes the prenylation of 12,13-dihydroxyfumitre-morgin C in the presence of dimethylallyl diphosphate, resulting in the formation of fumitremorgin B. Fumitremorgin B is further converted to verruculogen by ftmOx1/ftmF via the insertion of an endoperoxide bond between the two prenyl moieties. In some fungal species, verruculogen is further converted to fumitremorgin A, but the enzymes involved in this step have not been identified yet. This is Verruculogen synthase from Aspergillus fumigatus (Neosartorya fumigata).